Consider the following 340-residue polypeptide: Protein RecA (340 aa).

65-72 is an ATP binding site; sequence GPESGGKT.

It belongs to the RecA family.

It localises to the cytoplasm. Its function is as follows. Can catalyze the hydrolysis of ATP in the presence of single-stranded DNA, the ATP-dependent uptake of single-stranded DNA by duplex DNA, and the ATP-dependent hybridization of homologous single-stranded DNAs. It interacts with LexA causing its activation and leading to its autocatalytic cleavage. This is Protein RecA from Thermus thermophilus (strain ATCC BAA-163 / DSM 7039 / HB27).